The sequence spans 146 residues: Kappa-casein (146 aa).

4 O-linked (GalNAc...) threonine glycosylation sites follow: threonine 97, threonine 107, threonine 112, and threonine 118. The residue at position 121 (threonine 121) is a Phosphothreonine. Phosphoserine; alternate is present on serine 125. Serine 125 carries an O-linked (GalNAc...) serine; alternate glycan. Threonine 142 carries O-linked (GalNAc...) threonine glycosylation. Serine 143 bears the Phosphoserine mark.

Belongs to the kappa-casein family. Mammary gland specific. Secreted in milk.

It is found in the secreted. Kappa-casein stabilizes micelle formation, preventing casein precipitation in milk. The polypeptide is Kappa-casein (CSN3) (Panthera uncia (Snow leopard)).